We begin with the raw amino-acid sequence, 574 residues long: Glycine--tRNA ligase (574 aa).

Arg96 and Glu162 together coordinate substrate. ATP is bound by residues 194 to 196 (RNE), 204 to 209 (IRLREF), 327 to 328 (EC), and 450 to 453 (GIDR). 209-213 (FTQAE) provides a ligand contact to substrate. 446–450 (EPSYG) serves as a coordination point for substrate.

The protein belongs to the class-II aminoacyl-tRNA synthetase family.

The protein resides in the cytoplasm. It catalyses the reaction tRNA(Gly) + glycine + ATP = glycyl-tRNA(Gly) + AMP + diphosphate. Its function is as follows. Catalyzes the attachment of glycine to tRNA(Gly). This is Glycine--tRNA ligase from Methanococcus maripaludis (strain C7 / ATCC BAA-1331).